A 425-amino-acid chain; its full sequence is MLDIKWIREHPEKLDEALAKRGIEPQAERLIKLDLERRSHVAKVQSAQERRNTASKKIGQALAVCDQKMAERFRAEVEEIKVFLSSATAEEKRLTESLENALSALPNIPLDDVPEGKDESDNVVLRHFSVPTTFDFTPKEHFDLGQNLKQMDFERASRLSGTRFTVLSGALARLERALGQFMLDVHVYEHGYTEVSVPLLVRDESVYGAAQLPKFADDLFRTTDGRWLISTAEVPLTNLVNNEILEISDLPLRFSSLTPCFRSEAGSAGRDTRGMLRQHQFWKVEMVSITTAEQSLIELERMTECAEDVLKRLDLPFRTMVLSTGDMGFAARKTYDIEVWLPGQGCYREISSCSVCGDFQGRRMNARYRKEGEKTLHFVHSLNGSGTAVGRCLIAVLENYQQADGSIIIPDVLQPYMRGMRCITA.

231-233 (TAE) contacts L-serine. 262–264 (RSE) serves as a coordination point for ATP. Glu285 lines the L-serine pocket. Residue 349 to 352 (EISS) participates in ATP binding. Ser385 lines the L-serine pocket.

The protein belongs to the class-II aminoacyl-tRNA synthetase family. Type-1 seryl-tRNA synthetase subfamily. In terms of assembly, homodimer. The tRNA molecule binds across the dimer.

It is found in the cytoplasm. The enzyme catalyses tRNA(Ser) + L-serine + ATP = L-seryl-tRNA(Ser) + AMP + diphosphate + H(+). It catalyses the reaction tRNA(Sec) + L-serine + ATP = L-seryl-tRNA(Sec) + AMP + diphosphate + H(+). It functions in the pathway aminoacyl-tRNA biosynthesis; selenocysteinyl-tRNA(Sec) biosynthesis; L-seryl-tRNA(Sec) from L-serine and tRNA(Sec): step 1/1. Catalyzes the attachment of serine to tRNA(Ser). Is also able to aminoacylate tRNA(Sec) with serine, to form the misacylated tRNA L-seryl-tRNA(Sec), which will be further converted into selenocysteinyl-tRNA(Sec). The polypeptide is Serine--tRNA ligase (Bartonella henselae (strain ATCC 49882 / DSM 28221 / CCUG 30454 / Houston 1) (Rochalimaea henselae)).